A 201-amino-acid chain; its full sequence is 3-isopropylmalate dehydratase small subunit (201 aa).

This sequence belongs to the LeuD family. LeuD type 1 subfamily. In terms of assembly, heterodimer of LeuC and LeuD.

The enzyme catalyses (2R,3S)-3-isopropylmalate = (2S)-2-isopropylmalate. Its pathway is amino-acid biosynthesis; L-leucine biosynthesis; L-leucine from 3-methyl-2-oxobutanoate: step 2/4. Catalyzes the isomerization between 2-isopropylmalate and 3-isopropylmalate, via the formation of 2-isopropylmaleate. The polypeptide is 3-isopropylmalate dehydratase small subunit (Shewanella sp. (strain MR-7)).